We begin with the raw amino-acid sequence, 91 residues long: Islet amyloid polypeptide (91 aa).

The first 22 residues, 1 to 22 (MGILKLPVVLIVLCVALNHLEG), serve as a signal peptide directing secretion. A propeptide spanning residues 23–33 (GGKPTESHQME) is cleaved from the precursor. Cysteine 37 and cysteine 42 are oxidised to a cystine. Tyrosine 72 is modified (tyrosine amide). Positions 78 to 91 (VEILKREPLSYLPI) are excised as a propeptide.

It belongs to the calcitonin family. As to quaternary structure, can form homodimers. Interacts with IDE and INS. Interaction with INS inhibits homodimerization and fibril formation.

It localises to the secreted. Its function is as follows. Amylin/IAPP is a glucoregulatory peptide hormone that plays an important role in the regulation of energy homeostasis. Selectively inhibits insulin-stimulated glucose utilization and glycogen deposition in muscle, while not affecting adipocyte glucose metabolism. IAPP function is mediated by the CALCR-RAMPs (AMYRs) receptor complexes. Amylin can also bind CALCR receptor in the absence of RAMPs, although it is more selective for AMYRs. This chain is Islet amyloid polypeptide (IAPP), found in Bos taurus (Bovine).